The primary structure comprises 482 residues: MVKICCIGAGYVGGPTMAVIALKCPDVEVVVVDISAPRIEGWNSERLPIYEPGLDDVVRQCRGRNLFFSTDVERHVADAGIVFVSVNTPTKTRGLGAGKAADLTYWESAARIIADVSRSDKIVVEKSTVPVKTAEAIEKILAHNSKGGNIRYQILSNPEFLAEGTAIQDLFSPDRVLIGGRETPEGRAAVAALKSIYARWVPDDRIITTNLWSAELSKLAANAFLAQRISSVNAISALCEATGADVTEVANSIGKDSRIGPRFLSASVGFGGSCFQKDILNLVYICECYGLPEVANYWHQVIRINDYQKSRFVNRVVSSMFNTVAGKKVAVLGFAFKKDTGDTRETPAIDVCKGLVGDKAVVSIYDPQVTEEQVQRDLVMNKFDWDHPRHLQPMSPSSAKHVAVSWDAYEAARGAHAVCILTEWDEFRRLDYQRMYDAMHKPAFLFDGRNVVDPDKLRRIGFVVYSIGKPLDHWLRDMPAVA.

NAD(+)-binding positions include 8-13 (GAGYVG), Asp33, Arg38, 86-90 (VNTPT), 127-128 (ST), and Glu163. Substrate is bound by residues 159–163 (EFLAE), 218–225 (KLAANAFL), and 258–271 (RIGP…VGFG). Cys274 functions as the Nucleophile in the catalytic mechanism. 274 to 277 (CFQK) is an NAD(+) binding site. 336-337 (FK) lines the substrate pocket. Arg344 contributes to the NAD(+) binding site. Phosphoserine is present on Ser395. Residue Arg449 participates in substrate binding.

This sequence belongs to the UDP-glucose/GDP-mannose dehydrogenase family.

The catalysed reaction is UDP-alpha-D-glucose + 2 NAD(+) + H2O = UDP-alpha-D-glucuronate + 2 NADH + 3 H(+). The protein operates within nucleotide-sugar biosynthesis; UDP-alpha-D-glucuronate biosynthesis; UDP-alpha-D-glucuronate from UDP-alpha-D-glucose: step 1/1. Involved in the biosynthesis of UDP-glucuronic acid (UDP-GlcA), providing nucleotide sugars for cell-wall polymers. This Oryza sativa subsp. japonica (Rice) protein is UDP-glucose 6-dehydrogenase 2 (UGD2).